The following is a 339-amino-acid chain: MTSQPSLPADDFDIYHVLAECTDYYDTLPVKEADGNQPHFQGVTGLWNLGNTCCVNAISQCLCSILPLVEYFLTGKYITALQKFLLPSDCSEVATAFAYLMTDMWLGDSDCVSPEIFWSALGNLYPAFTKKMQQDAQEFLICVLNELHEALKKYHYSRRRSYEKGSTQRCCRKWITTETSIITQLFEEQLNYSIVCLKCEKCTYKNEVFTVFSLPIPSKYECSLRDCLQCFFQQDALTWNNEIHCSFCETKQETAVRASISKAPKIIIFHLKRFDIQGTTKRKLRTDIHYPLTNLDLTPYICSIFRKYPKYNLCAVVNHFGDLDGGHYTAFCKNSVTQA.

The USP domain maps to 44 to 339; sequence TGLWNLGNTC…AFCKNSVTQA (296 aa). Residue cysteine 53 is the Nucleophile of the active site. Histidine 327 serves as the catalytic Proton acceptor.

Belongs to the peptidase C19 family. In terms of tissue distribution, weakly expressed in a few tissues.

It localises to the cytoplasm. The protein resides in the cytoskeleton. Its subcellular location is the microtubule organizing center. It is found in the centrosome. The protein localises to the nucleus. It catalyses the reaction Thiol-dependent hydrolysis of ester, thioester, amide, peptide and isopeptide bonds formed by the C-terminal Gly of ubiquitin (a 76-residue protein attached to proteins as an intracellular targeting signal).. Its function is as follows. Deubiquitinating enzyme that removes conjugated ubiquitin from specific proteins to regulate different cellular processes. Regulates the inflammasome signaling pathway by deubiquitinating 'Lys-63'-linked polyubiquitination of the PYCARD/ASC adapter protein. Regulates the ubiquitination and stability of the ACE2 protein. Acts as a negative regulator of the G2/M checkpoint pathway, by preventing serine/threonine kinase WEE1 degradation, thereby repressing entry into mitosis following activation of the G2/M DNA damage checkpoint. The sequence is that of Ubiquitin carboxyl-terminal hydrolase 50 from Homo sapiens (Human).